Reading from the N-terminus, the 363-residue chain is Putative transcriptional activator MSA2 (363 aa).

A disordered region spans residues 1–20 (MVYTTPQQQQRFSSTPQSSH). Residues serine 157 and serine 292 each carry the phosphoserine modification.

As to quaternary structure, interacts with transcription complexes SCB-binding factor (SBF) and MCB-binding factor (MBF). Interacts with SWI4.

The chain is Putative transcriptional activator MSA2 (MSA2) from Saccharomyces cerevisiae (strain ATCC 204508 / S288c) (Baker's yeast).